We begin with the raw amino-acid sequence, 132 residues long: Small ribosomal subunit protein eS12 (132 aa).

N-acetylalanine is present on A2. Residue K129 is modified to N6-succinyllysine.

It belongs to the eukaryotic ribosomal protein eS12 family. As to quaternary structure, part of the small subunit (SSU) processome, composed of more than 70 proteins and the RNA chaperone small nucleolar RNA (snoRNA) U3. Subunit of the 40S ribosomal complex.

The protein resides in the nucleus. Its subcellular location is the nucleolus. Its function is as follows. Part of the small subunit (SSU) processome, first precursor of the small eukaryotic ribosomal subunit. During the assembly of the SSU processome in the nucleolus, many ribosome biogenesis factors, an RNA chaperone and ribosomal proteins associate with the nascent pre-rRNA and work in concert to generate RNA folding, modifications, rearrangements and cleavage as well as targeted degradation of pre-ribosomal RNA by the RNA exosome. Subunit of the 40S ribosomal complex. The chain is Small ribosomal subunit protein eS12 (Rps12) from Mus musculus (Mouse).